The sequence spans 485 residues: Aspartyl/glutamyl-tRNA(Asn/Gln) amidotransferase subunit B (485 aa).

This sequence belongs to the GatB/GatE family. GatB subfamily. In terms of assembly, heterotrimer of A, B and C subunits.

The catalysed reaction is L-glutamyl-tRNA(Gln) + L-glutamine + ATP + H2O = L-glutaminyl-tRNA(Gln) + L-glutamate + ADP + phosphate + H(+). The enzyme catalyses L-aspartyl-tRNA(Asn) + L-glutamine + ATP + H2O = L-asparaginyl-tRNA(Asn) + L-glutamate + ADP + phosphate + 2 H(+). Functionally, allows the formation of correctly charged Asn-tRNA(Asn) or Gln-tRNA(Gln) through the transamidation of misacylated Asp-tRNA(Asn) or Glu-tRNA(Gln) in organisms which lack either or both of asparaginyl-tRNA or glutaminyl-tRNA synthetases. The reaction takes place in the presence of glutamine and ATP through an activated phospho-Asp-tRNA(Asn) or phospho-Glu-tRNA(Gln). This is Aspartyl/glutamyl-tRNA(Asn/Gln) amidotransferase subunit B from Borrelia garinii subsp. bavariensis (strain ATCC BAA-2496 / DSM 23469 / PBi) (Borreliella bavariensis).